The primary structure comprises 208 residues: Inducible T-cell costimulator (208 aa).

Positions 1-19 (MKSDLWYFLLFCFQVEALT) are cleaved as a signal peptide. The Extracellular segment spans residues 20-140 (GEINDSTKSE…YESQTCCQLK (121 aa)). The N-linked (GlcNAc...) asparagine glycan is linked to Asn23. Positions 30 to 132 (MFTFHDGGVQ…ISREYLNVYE (103 aa)) constitute an Ig-like V-type domain. 2 cysteine pairs are disulfide-bonded: Cys42-Cys108 and Cys63-Cys82. N-linked (GlcNAc...) asparagine glycosylation is present at Asn122. A helical transmembrane segment spans residues 141–161 (FWLPIGCAAFVVVYIFGCIFL). Residues 162-208 (CWLTKKKYRSSVHDPNSEYMFMAAVNTAKKPGLTGVTHNLELCGTQA) lie on the Cytoplasmic side of the membrane.

In terms of assembly, homodimer; disulfide-linked. Interacts with ICOSLG. Interacts with PIK3R1. Interacts with TBK1; this interaction is critical for the maturation of T follicular regulatory cells. Post-translationally, N-glycosylated.

It localises to the cell membrane. In terms of biological role, stimulatory receptor expressed in activated or antigen-experienced T-cells that plays an important role in the immune response. Upon binding to its ligand ICOSL expressed on antigen presenting cells (APCs), delivers costimulatory signals that enhances all basic T-cell responses to a foreign antigen, namely proliferation, secretion of lymphokines including IL10, up-regulation of molecules that mediate cell-cell interaction, and effective help for antibody secretion by B-cells. Also acts as a costimulatory receptor critical for the differentiation of T follicular regulatory cells upon immune challenges such as viral infection. Mechanistically, potentiates TCR-induced calcium flux by augmenting PLCG1 activation and actin remodeling. In addition, activates PI3K signaling pathways independently of calcium flux. Essential both for efficient interaction between T and B-cells and for normal antibody responses to T-cell dependent antigens. Prevents the apoptosis of pre-activated T-cells. Plays a critical role in CD40-mediated class switching of immunoglobin isotypes. In Canis lupus familiaris (Dog), this protein is Inducible T-cell costimulator (ICOS).